We begin with the raw amino-acid sequence, 326 residues long: MAVNPDRTTPFLGVNDPKVAQTGDSMFEGYLEPEQAQDYFAEAEKISIVQQFAQKIPMGTTGQKIPHWTGDVSASWIGEGDMKPITKGNMTSQTIAPHKIATIFVASAETVRANPANYLGTMRTKVATAFAMAFDNAAINGTDSPFPTFLAQTTKEVSLVDPDGTGSNADLTVYDAVAVNALSLLVNAGKKWTHTLLDDITEPILNGAKDKSGRPLFIESTYTEENSPFRLGRIVARPTILSDHVASGTVVGYQGDFRQLVWGQVGGLSFDVTDQATLNLGTPQAPNFVSLWQHNLVAVRVEAEYAFHCNDKDAFVKLTNVDATEA.

This sequence belongs to the L5likevirus major capsid protein gp17 family. As to quaternary structure, L5 head shells are composed of gp17 subunits that are extensively cross-linked.

It localises to the virion. The polypeptide is Probable major capsid protein gp17 (17) (Mycobacterium (Mycobacteriophage L5)).